Here is a 636-residue protein sequence, read N- to C-terminus: ATP-dependent DNA helicase YoaA (636 aa).

Residues Gln10–Ala272 form the Helicase ATP-binding domain. Ala45–Thr52 contacts ATP. Positions 108, 168, 173, and 179 each coordinate [4Fe-4S] cluster. The DEAH box motif lies at Asp225–His228.

This sequence belongs to the helicase family. DinG subfamily. In terms of assembly, interacts with the DNA polymerase III subunit Chi (holC), probably as a 1:1 complex. [4Fe-4S] cluster is required as a cofactor. It depends on Mg(2+) as a cofactor.

The catalysed reaction is Couples ATP hydrolysis with the unwinding of duplex DNA at the replication fork by translocating in the 5'-3' direction. This creates two antiparallel DNA single strands (ssDNA). The leading ssDNA polymer is the template for DNA polymerase III holoenzyme which synthesizes a continuous strand.. It catalyses the reaction ATP + H2O = ADP + phosphate + H(+). Its activity is regulated as follows. Non-hydrolyzable ATP analogs ATP-gamma-S and adenylyl-imidodiphosphate (AMP-PNP) inhibit helicase activity. In terms of biological role, DNA-dependent ATPase and 5'-3' DNA helicase. Has single-stranded (ss)DNA-dependent ATPase activity and 5'-3' helicase activity on forked DNA; both activities were measure in a YoaA:HolC (chi) complex. Requires a 20-35 nucleotide (nt) 5'-ssDNA tail; dsDNA with a 20 nt gap is also unwound. Unwinds damaged 3' nascent ends (such as those terminated by 3' azidothymidine (AZT), 3' dideoxy-C or an abasic site on the translocating strand), to promote repair and AZT excision. Without HolC the protein has much lower activity which could be due to YoaA instability or helicase stimulation by HolC. Genetically identified as involved in the repair of replication forks and tolerance of the chain-terminating nucleoside analog AZT. May act in proofreading during nucleotide misincorporation, it appears to aid in the removal of potential A-to-T transversion mutations in ndk mutants. This Escherichia coli (strain K12) protein is ATP-dependent DNA helicase YoaA (yoaA).